A 514-amino-acid chain; its full sequence is Na(+)/H(+) antiporter NhaB (514 aa).

12 helical membrane passes run 23-43 (LALI…PFVA), 63-83 (PLLP…TSAA), 97-117 (LLLM…LFIF), 120-140 (LLLS…AAAF), 144-164 (FLDA…FYGI), 202-222 (LMMH…VGEP), 238-258 (FFLR…FTCV), 303-323 (AIIG…VGLI), 357-377 (LTVF…APII), 391-411 (LFYL…VGTI), 447-467 (ATPN…APLI), and 475-495 (VWMA…CVEF).

It belongs to the NhaB Na(+)/H(+) (TC 2.A.34) antiporter family.

The protein resides in the cell inner membrane. The catalysed reaction is 2 Na(+)(in) + 3 H(+)(out) = 2 Na(+)(out) + 3 H(+)(in). Its function is as follows. Na(+)/H(+) antiporter that extrudes sodium in exchange for external protons. The sequence is that of Na(+)/H(+) antiporter NhaB from Citrobacter koseri (strain ATCC BAA-895 / CDC 4225-83 / SGSC4696).